We begin with the raw amino-acid sequence, 465 residues long: UDP-N-acetylmuramoylalanine--D-glutamate ligase (465 aa).

124–130 contacts ATP; the sequence is GSDGKTT.

Belongs to the MurCDEF family.

It localises to the cytoplasm. It carries out the reaction UDP-N-acetyl-alpha-D-muramoyl-L-alanine + D-glutamate + ATP = UDP-N-acetyl-alpha-D-muramoyl-L-alanyl-D-glutamate + ADP + phosphate + H(+). The protein operates within cell wall biogenesis; peptidoglycan biosynthesis. Its function is as follows. Cell wall formation. Catalyzes the addition of glutamate to the nucleotide precursor UDP-N-acetylmuramoyl-L-alanine (UMA). The polypeptide is UDP-N-acetylmuramoylalanine--D-glutamate ligase (Ruminiclostridium cellulolyticum (strain ATCC 35319 / DSM 5812 / JCM 6584 / H10) (Clostridium cellulolyticum)).